Reading from the N-terminus, the 133-residue chain is Ribosome-binding factor A (133 aa).

This sequence belongs to the RbfA family. Monomer. Binds 30S ribosomal subunits, but not 50S ribosomal subunits or 70S ribosomes.

It is found in the cytoplasm. One of several proteins that assist in the late maturation steps of the functional core of the 30S ribosomal subunit. Associates with free 30S ribosomal subunits (but not with 30S subunits that are part of 70S ribosomes or polysomes). Required for efficient processing of 16S rRNA. May interact with the 5'-terminal helix region of 16S rRNA. This Acinetobacter baylyi (strain ATCC 33305 / BD413 / ADP1) protein is Ribosome-binding factor A.